The chain runs to 114 residues: T cell receptor beta variable 10-2 (114 aa).

Residues 1-21 (MGTRLFFYVALCLLWAGHRDA) form the signal peptide. Residues 22–114 (GITQSPRYKI…TSVYFCASSE (93 aa)) form the Ig-like domain. The cysteines at positions 42 and 110 are disulfide-linked.

As to quaternary structure, alpha-beta TR is a heterodimer composed of an alpha and beta chain; disulfide-linked. The alpha-beta TR is associated with the transmembrane signaling CD3 coreceptor proteins to form the TR-CD3 (TcR or TCR). The assembly of alpha-beta TR heterodimers with CD3 occurs in the endoplasmic reticulum where a single alpha-beta TR heterodimer associates with one CD3D-CD3E heterodimer, one CD3G-CD3E heterodimer and one CD247 homodimer forming a stable octameric structure. CD3D-CD3E and CD3G-CD3E heterodimers preferentially associate with TR alpha and TR beta chains, respectively. The association of the CD247 homodimer is the last step of TcR assembly in the endoplasmic reticulum and is required for transport to the cell surface.

Its subcellular location is the cell membrane. V region of the variable domain of T cell receptor (TR) beta chain that participates in the antigen recognition. Alpha-beta T cell receptors are antigen specific receptors which are essential to the immune response and are present on the cell surface of T lymphocytes. Recognize peptide-major histocompatibility (MH) (pMH) complexes that are displayed by antigen presenting cells (APC), a prerequisite for efficient T cell adaptive immunity against pathogens. Binding of alpha-beta TR to pMH complex initiates TR-CD3 clustering on the cell surface and intracellular activation of LCK that phosphorylates the ITAM motifs of CD3G, CD3D, CD3E and CD247 enabling the recruitment of ZAP70. In turn ZAP70 phosphorylates LAT, which recruits numerous signaling molecules to form the LAT signalosome. The LAT signalosome propagates signal branching to three major signaling pathways, the calcium, the mitogen-activated protein kinase (MAPK) kinase and the nuclear factor NF-kappa-B (NF-kB) pathways, leading to the mobilization of transcription factors that are critical for gene expression and essential for T cell growth and differentiation. The T cell repertoire is generated in the thymus, by V-(D)-J rearrangement. This repertoire is then shaped by intrathymic selection events to generate a peripheral T cell pool of self-MH restricted, non-autoaggressive T cells. Post-thymic interaction of alpha-beta TR with the pMH complexes shapes TR structural and functional avidity. The chain is T cell receptor beta variable 10-2 from Homo sapiens (Human).